The following is a 322-amino-acid chain: Acetyl-coenzyme A carboxylase carboxyl transferase subunit alpha (322 aa).

A CoA carboxyltransferase C-terminal domain is found at 30–293 (ALDISAEIAR…KQTLQESLRK (264 aa)).

Belongs to the AccA family. Acetyl-CoA carboxylase is a heterohexamer composed of biotin carboxyl carrier protein (AccB), biotin carboxylase (AccC) and two subunits each of ACCase subunit alpha (AccA) and ACCase subunit beta (AccD).

Its subcellular location is the cytoplasm. It catalyses the reaction N(6)-carboxybiotinyl-L-lysyl-[protein] + acetyl-CoA = N(6)-biotinyl-L-lysyl-[protein] + malonyl-CoA. The protein operates within lipid metabolism; malonyl-CoA biosynthesis; malonyl-CoA from acetyl-CoA: step 1/1. Functionally, component of the acetyl coenzyme A carboxylase (ACC) complex. First, biotin carboxylase catalyzes the carboxylation of biotin on its carrier protein (BCCP) and then the CO(2) group is transferred by the carboxyltransferase to acetyl-CoA to form malonyl-CoA. In Nitrosomonas europaea (strain ATCC 19718 / CIP 103999 / KCTC 2705 / NBRC 14298), this protein is Acetyl-coenzyme A carboxylase carboxyl transferase subunit alpha.